Here is a 643-residue protein sequence, read N- to C-terminus: Alpha-dioxygenase PIOX (643 aa).

The active-site Proton acceptor is the His167. Residue Asp168 participates in Ca(2+) binding. Residue His172 coordinates heme b. Positions 220, 222, 224, and 226 each coordinate Ca(2+). Heme b-binding residues include His392, Arg489, and Arg493.

This sequence belongs to the peroxidase family. Heme b is required as a cofactor. Ca(2+) serves as cofactor.

It carries out the reaction a 1,2-saturated fatty acid + O2 = a (2R)-2-hydroperoxy fatty acid. The enzyme catalyses (9Z,12Z,15Z)-octadecatrienoate + O2 = (R)-2-hydroperoxy-(9Z,12Z,15Z)-octadecatrienoate. It catalyses the reaction (9Z,12Z)-octadecadienoate + O2 = (2R,9Z,12Z)-2-hydroperoxyoctadecadienoate. In terms of biological role, alpha-dioxygenase that catalyzes the primary oxygenation step of a variety of 14-20 carbon fatty acids, containing up to three unsaturated bonds, into their corresponding 2R-hydroperoxides. Involved in the production of oxylipins that function in cell signaling, wound healing, and protection from infection. This chain is Alpha-dioxygenase PIOX, found in Nicotiana tabacum (Common tobacco).